A 414-amino-acid polypeptide reads, in one-letter code: 5-aminolevulinate synthase (414 aa).

Substrate is bound by residues Arg-22, Ser-133, and Lys-152. 3 residues coordinate pyridoxal 5'-phosphate: Ser-185, His-213, and Thr-241. Lys-244 is an active-site residue. Lys-244 carries the post-translational modification N6-(pyridoxal phosphate)lysine. Residues Thr-273 and Thr-274 each coordinate pyridoxal 5'-phosphate. Residue Thr-359 coordinates substrate.

This sequence belongs to the class-II pyridoxal-phosphate-dependent aminotransferase family. Homodimer. The cofactor is pyridoxal 5'-phosphate.

The catalysed reaction is succinyl-CoA + glycine + H(+) = 5-aminolevulinate + CO2 + CoA. Its pathway is porphyrin-containing compound metabolism; protoporphyrin-IX biosynthesis; 5-aminolevulinate from glycine: step 1/1. This Rickettsia conorii (strain ATCC VR-613 / Malish 7) protein is 5-aminolevulinate synthase (hemA).